Consider the following 340-residue polypeptide: MILSIESSCDDSSLALTRIEDAKLIAHFKISQEKHHSSYGGVVPELASRLHAENLPLLLERIKISLNKDFSKLKAIAITNQPGLSVTLIEGLMMAKALSLSLNLPLILEDHLRGHVYSLFINEKQTCMPLSVLLVSGGHSLILEVRDYEDIKIVATSLDDSFGESFDKVSKMLDLGYPGGPIVEKLALDYAHPNEPLMFPVPLKNSPNLAFSFSGLKNAVRLEVEKNAPNLNEKIKQKIGYHFQSAAIEHLIQQTKRYFKIKRPKIFGIVGGASQNLALRKAFENLCVEFDCKLVLAPLEFCSDNAAMIGRSSLEAYQKKRFVPLEKANISPRTLLKSFE.

Fe cation contacts are provided by His-111 and His-115. Residues 134-138 (LVSGG), Asp-167, Gly-180, and Asn-276 contribute to the substrate site. Residue Asp-304 participates in Fe cation binding.

Belongs to the KAE1 / TsaD family. Fe(2+) serves as cofactor.

The protein localises to the cytoplasm. The enzyme catalyses L-threonylcarbamoyladenylate + adenosine(37) in tRNA = N(6)-L-threonylcarbamoyladenosine(37) in tRNA + AMP + H(+). Required for the formation of a threonylcarbamoyl group on adenosine at position 37 (t(6)A37) in tRNAs that read codons beginning with adenine. Is involved in the transfer of the threonylcarbamoyl moiety of threonylcarbamoyl-AMP (TC-AMP) to the N6 group of A37, together with TsaE and TsaB. TsaD likely plays a direct catalytic role in this reaction. The protein is tRNA N6-adenosine threonylcarbamoyltransferase of Helicobacter pylori (strain G27).